We begin with the raw amino-acid sequence, 258 residues long: Bidirectional sugar transporter SWEET7 (258 aa).

The Extracellular portion of the chain corresponds to 1–11; it reads MVFAHLNLLRK. A helical membrane pass occupies residues 12-32; that stretch reads IVGIIGNFIALCLFLSPTPTF. The MtN3/slv 1 domain maps to 12–100; it reads IVGIIGNFIA…IFFVYCGRQK (89 aa). The Cytoplasmic segment spans residues 33–46; it reads VRIVKKKSVEEYSP. The chain crosses the membrane as a helical span at residues 47-67; it reads IPYLATLINCLVWVLYGLPTV. Over 68 to 73 the chain is Extracellular; it reads HPDSTL. The chain crosses the membrane as a helical span at residues 74 to 94; that stretch reads VITINGTGILIEIVFLTIFFV. Over 95-102 the chain is Cytoplasmic; sequence YCGRQKQR. A helical transmembrane segment spans residues 103 to 123; that stretch reads LIISAVIAAETAFIAILAVLV. Residues 124 to 134 lie on the Extracellular side of the membrane; the sequence is LTLQHTTEKRT. Residues 135–155 form a helical membrane-spanning segment; sequence MSVGIVCCVFNVMMYASPLSV. The region spanning 136–221 is the MtN3/slv 2 domain; that stretch reads SVGIVCCVFN…LYGAYYKSTK (86 aa). At 156-166 the chain is on the cytoplasmic side; sequence MKMVIKTKSVE. The chain crosses the membrane as a helical span at residues 167-187; sequence FMPFWLSVAGFLNAGVWTIYA. At 188 to 193 the chain is on the extracellular side; that stretch reads LMPFDP. Residues 194 to 214 traverse the membrane as a helical segment; sequence FMAIPNGIGCLFGLAQLILYG. Residues 215-258 lie on the Cytoplasmic side of the membrane; sequence AYYKSTKRIMAERENQPGYVGLSSAIARTGSEKTANTNQEPNNV.

It belongs to the SWEET sugar transporter family. Forms heterooligomers with SWEET8, SWEET11, SWEET13, SWEET16 and SWEET17.

The protein resides in the cell membrane. Functionally, mediates both low-affinity uptake and efflux of sugar across the plasma membrane. The protein is Bidirectional sugar transporter SWEET7 of Arabidopsis thaliana (Mouse-ear cress).